The chain runs to 143 residues: Actinoxanthin (143 aa).

The N-terminal stretch at methionine 1–alanine 33 is a signal peptide. 2 disulfides stabilise this stretch: cysteine 69-cysteine 78 and cysteine 119-cysteine 124.

It belongs to the neocarzinostatin family.

Functionally, binds non-covalently to a chromophore which is the cytotoxic and mutagenic component of the antibiotic. The chromophore binds to DNA as a weak intercalator and causes single- and double-strand breaks. The chain is Actinoxanthin (axnA) from Streptomyces globisporus.